We begin with the raw amino-acid sequence, 982 residues long: Probable DNA-directed RNA polymerase (982 aa).

This sequence belongs to the RNA polymerase beta chain family.

It carries out the reaction RNA(n) + a ribonucleoside 5'-triphosphate = RNA(n+1) + diphosphate. Functionally, the presence of the two linear plasmids, termed pGKL1 and pGKL2, in strains of Kluyveromyces lactis confers the killer phenotype to the host cell, by promoting the secretion of a toxin able to inhibit the growth of sensitive strains. The polypeptide is Probable DNA-directed RNA polymerase (Kluyveromyces lactis (strain ATCC 8585 / CBS 2359 / DSM 70799 / NBRC 1267 / NRRL Y-1140 / WM37) (Yeast)).